We begin with the raw amino-acid sequence, 638 residues long: 1-deoxy-D-xylulose-5-phosphate synthase (638 aa).

Thiamine diphosphate is bound by residues histidine 79 and 120 to 122 (AHS). Residue aspartate 151 participates in Mg(2+) binding. Residues 152–153 (GA), asparagine 180, tyrosine 289, and glutamate 371 each bind thiamine diphosphate. Residue asparagine 180 participates in Mg(2+) binding.

The protein belongs to the transketolase family. DXPS subfamily. As to quaternary structure, homodimer. Requires Mg(2+) as cofactor. The cofactor is thiamine diphosphate.

The enzyme catalyses D-glyceraldehyde 3-phosphate + pyruvate + H(+) = 1-deoxy-D-xylulose 5-phosphate + CO2. Its pathway is metabolic intermediate biosynthesis; 1-deoxy-D-xylulose 5-phosphate biosynthesis; 1-deoxy-D-xylulose 5-phosphate from D-glyceraldehyde 3-phosphate and pyruvate: step 1/1. Functionally, catalyzes the acyloin condensation reaction between C atoms 2 and 3 of pyruvate and glyceraldehyde 3-phosphate to yield 1-deoxy-D-xylulose-5-phosphate (DXP). This chain is 1-deoxy-D-xylulose-5-phosphate synthase, found in Rhizobium etli (strain CIAT 652).